We begin with the raw amino-acid sequence, 166 residues long: Cytochrome P450 regulator dap1 (166 aa).

The helical transmembrane segment at 4-21 (TQVVFIVTLFLYLLITRW) threads the bilayer. Residues 42–145 (DYTPAELKEY…QKYQAVGRLI (104 aa)) enclose the Cytochrome b5 heme-binding domain. A Phosphoserine modification is found at Ser-108. Position 138 (Tyr-138) interacts with heme.

It belongs to the cytochrome b5 family. MAPR subfamily. As to quaternary structure, interacts with erg5 and erg11.

It localises to the endoplasmic reticulum. It is found in the membrane. Functionally, required for sterol biosynthesis. Functions as a positive regulator of cytochrome P450 enzymes erg5 and erg11. Function requires bound heme. The sequence is that of Cytochrome P450 regulator dap1 (dap1) from Schizosaccharomyces pombe (strain 972 / ATCC 24843) (Fission yeast).